A 459-amino-acid chain; its full sequence is Glutamyl-tRNA reductase (459 aa).

Residues 49–52, Ser109, 114–116, and Gln120 contribute to the substrate site; these read TCNR and ETQ. The active-site Nucleophile is Cys50. NADP(+) is bound at residue 189–194; the sequence is GAGKMG.

Belongs to the glutamyl-tRNA reductase family. Homodimer.

The enzyme catalyses (S)-4-amino-5-oxopentanoate + tRNA(Glu) + NADP(+) = L-glutamyl-tRNA(Glu) + NADPH + H(+). Its pathway is porphyrin-containing compound metabolism; protoporphyrin-IX biosynthesis; 5-aminolevulinate from L-glutamyl-tRNA(Glu): step 1/2. Its function is as follows. Catalyzes the NADPH-dependent reduction of glutamyl-tRNA(Glu) to glutamate 1-semialdehyde (GSA). This chain is Glutamyl-tRNA reductase, found in Halalkalibacterium halodurans (strain ATCC BAA-125 / DSM 18197 / FERM 7344 / JCM 9153 / C-125) (Bacillus halodurans).